The chain runs to 334 residues: Protein U17/U16 (334 aa).

This sequence belongs to the herpesviridae US22 family.

Functionally, isoform 3 can transactivate the human immunodeficiency virus type 1 promoter. In Human herpesvirus 6A (strain Uganda-1102) (HHV-6 variant A), this protein is Protein U17/U16 (U17/U16).